The sequence spans 78 residues: DNA-directed RNA polymerase subunit omega (78 aa).

It belongs to the RNA polymerase subunit omega family. In cyanobacteria the RNAP catalytic core is composed of 2 alpha, 1 beta, 1 beta', 1 gamma and 1 omega subunit. When a sigma factor is associated with the core the holoenzyme is formed, which can initiate transcription.

The catalysed reaction is RNA(n) + a ribonucleoside 5'-triphosphate = RNA(n+1) + diphosphate. Its function is as follows. Promotes RNA polymerase assembly. Latches the N- and C-terminal regions of the beta' subunit thereby facilitating its interaction with the beta and alpha subunits. The chain is DNA-directed RNA polymerase subunit omega from Prochlorococcus marinus (strain MIT 9301).